Reading from the N-terminus, the 174-residue chain is ATP synthase subunit delta (174 aa).

The protein belongs to the ATPase delta chain family. As to quaternary structure, F-type ATPases have 2 components, F(1) - the catalytic core - and F(0) - the membrane proton channel. F(1) has five subunits: alpha(3), beta(3), gamma(1), delta(1), epsilon(1). F(0) has three main subunits: a(1), b(2) and c(10-14). The alpha and beta chains form an alternating ring which encloses part of the gamma chain. F(1) is attached to F(0) by a central stalk formed by the gamma and epsilon chains, while a peripheral stalk is formed by the delta and b chains.

Its subcellular location is the cell inner membrane. F(1)F(0) ATP synthase produces ATP from ADP in the presence of a proton or sodium gradient. F-type ATPases consist of two structural domains, F(1) containing the extramembraneous catalytic core and F(0) containing the membrane proton channel, linked together by a central stalk and a peripheral stalk. During catalysis, ATP synthesis in the catalytic domain of F(1) is coupled via a rotary mechanism of the central stalk subunits to proton translocation. In terms of biological role, this protein is part of the stalk that links CF(0) to CF(1). It either transmits conformational changes from CF(0) to CF(1) or is implicated in proton conduction. The protein is ATP synthase subunit delta of Francisella tularensis subsp. tularensis (strain FSC 198).